A 185-amino-acid polypeptide reads, in one-letter code: Elongation factor P (185 aa).

It belongs to the elongation factor P family.

The protein resides in the cytoplasm. Its pathway is protein biosynthesis; polypeptide chain elongation. In terms of biological role, involved in peptide bond synthesis. Stimulates efficient translation and peptide-bond synthesis on native or reconstituted 70S ribosomes in vitro. Probably functions indirectly by altering the affinity of the ribosome for aminoacyl-tRNA, thus increasing their reactivity as acceptors for peptidyl transferase. The chain is Elongation factor P from Alkaliphilus oremlandii (strain OhILAs) (Clostridium oremlandii (strain OhILAs)).